The primary structure comprises 146 residues: Histone H2B (146 aa).

Positions 1-16 are enriched in basic and acidic residues; that stretch reads MAPRADKKPAEKKPGA. The segment at 1–52 is disordered; sequence MAPRADKKPAEKKPGAEKTPVAEKAPAEKKPRAGKKLPRDAGAAGDKKKKRA. An N6-acetyllysine mark is found at K7, K35, and K36. K142 participates in a covalent cross-link: Glycyl lysine isopeptide (Lys-Gly) (interchain with G-Cter in ubiquitin).

It belongs to the histone H2B family. In terms of assembly, the nucleosome is a histone octamer containing two molecules each of H2A, H2B, H3 and H4 assembled in one H3-H4 heterotetramer and two H2A-H2B heterodimers. The octamer wraps approximately 147 bp of DNA. Can be acetylated to form H2BK6ac, H2BK33ac and H2BK34ac. Post-translationally, monoubiquitinated to form H2BK143ub1; may give a specific tag for epigenetic transcriptional activation.

Its subcellular location is the nucleus. It localises to the chromosome. Functionally, core component of nucleosome. Nucleosomes wrap and compact DNA into chromatin, limiting DNA accessibility to the cellular machineries which require DNA as a template. Histones thereby play a central role in transcription regulation, DNA repair, DNA replication and chromosomal stability. DNA accessibility is regulated via a complex set of post-translational modifications of histones, also called histone code, and nucleosome remodeling. This is Histone H2B (HIS2B) from Nicotiana tabacum (Common tobacco).